The sequence spans 409 residues: Shaggy-related protein kinase gamma (409 aa).

Ala-2 is subject to N-acetylalanine. In terms of domain architecture, Protein kinase spans 73–357 (YMAERVVGHG…ALDSLVHPFF (285 aa)). ATP-binding positions include 79–87 (VGHGSFGVV) and Lys-102. The active-site Proton acceptor is Asp-198. A Phosphotyrosine modification is found at Tyr-233.

It belongs to the protein kinase superfamily. CMGC Ser/Thr protein kinase family. GSK-3 subfamily. In terms of assembly, binds to KIB1. Component of a complex made of POLAR, BASL, ASK7/BIN2 and ASK3/SK12. Binds to POLAR and BASL. In terms of processing, autophosphorylated mainly on threonine and serine residues. Roots, shoots and leaves.

The protein localises to the cytoplasm. Its subcellular location is the cell cortex. It carries out the reaction L-seryl-[protein] + ATP = O-phospho-L-seryl-[protein] + ADP + H(+). The catalysed reaction is L-threonyl-[protein] + ATP = O-phospho-L-threonyl-[protein] + ADP + H(+). May mediate extracellular signals to regulate transcription in differentiating cells. Probably involved first at the cortical polarity site, to restrict MAPK signaling and promote asymmetric cell division (ACD), and second in the nucleus of stomatal lineage ground cells (SLGCs) or meristemoids, to limit cell division and to promote differentiation into pavement or stomatal guard cells, respectively. Phosphorylate YDA and SPCH in vitro. In Arabidopsis thaliana (Mouse-ear cress), this protein is Shaggy-related protein kinase gamma.